A 452-amino-acid polypeptide reads, in one-letter code: uncharacterized protein (452 aa).

72-79 (GPPGSGKT) contributes to the ATP binding site.

It belongs to the AAA ATPase family. RarA/MGS1/WRNIP1 subfamily.

This is an uncharacterized protein from Mycobacterium tuberculosis (strain ATCC 25618 / H37Rv).